A 262-amino-acid polypeptide reads, in one-letter code: Tethering factor for nuclear proteasome cut8 (262 aa).

Belongs to the cut8/STS1 family. Binds the proteasome. In terms of processing, the N-terminal part (residues 1 to 72) is polyubiquitinated by rhp6, which is required for the interaction with the proteasome.

The protein localises to the nucleus envelope. In terms of biological role, together with nucleoporin alm1, tethers the proteasome to the nuclear envelope. Involved in ubiquitin-mediated protein degradation and facilitates the degradation of nuclear proteins like mitotic cyclin and cut2. Required for normal progression of anaphase. The sequence is that of Tethering factor for nuclear proteasome cut8 from Schizosaccharomyces pombe (strain 972 / ATCC 24843) (Fission yeast).